The chain runs to 327 residues: uncharacterized protein (327 aa).

A helical transmembrane segment spans residues 12 to 32 (LVVVVVAIAIFTLVLLMLWEG). Positions 149 to 170 (AFSAVETSEGSDQESEGADEQG) are disordered. Positions 157-167 (EGSDQESEGAD) are enriched in acidic residues. Residues 162-227 (ESEGADEQGK…LDEENREVAE (66 aa)) are a coiled coil.

It localises to the membrane. This is an uncharacterized protein from Encephalitozoon cuniculi (strain GB-M1) (Microsporidian parasite).